Reading from the N-terminus, the 305-residue chain is Probable cell division protein WhiA (305 aa).

The H-T-H motif DNA-binding region spans 269–302 (TIKELGELLDPPLGKSGVNHRLRKLVERSNDLKK).

Belongs to the WhiA family.

Its function is as follows. Involved in cell division and chromosome segregation. In Lactococcus lactis subsp. cremoris (strain MG1363), this protein is Probable cell division protein WhiA.